The chain runs to 334 residues: WD repeat-containing protein 54 (334 aa).

WD repeat units follow at residues 162-206 (GHQM…TLLT), 208-247 (IPGF…LHVQ), and 250-289 (AHAR…ESGY).

In terms of assembly, homodimer and homotrimer; forms tight forms of dimers and trimers. Interacts with IZUMO1 and IZUMO1R/JUNO. Post-translationally, cross-linked to tightly form both dimers and trimers by TGM2. Cross-linking enhances the activation of EGF receptor-mediated signaling pathway. Cross-linking is inhibited by EGF. In terms of processing, ubiquitinated. EGF increases ubiquitination. In terms of tissue distribution, expressed in epithelial cells (at protein level). Isoform 3 expression is highly increased in colorectal cancer cells.

It localises to the vesicle. The protein localises to the cytoplasm. Its subcellular location is the cell membrane. In terms of biological role, plays a role in the adhesion and fusion of the sperm-oocyte membrane through its interactions with IZUMO1 and IZUMO1R/JUNO. When cross-linked to form dimers and trimers, it has a regulatory effect on ERK signaling pathway activity in response to EGF stimulation. Colocalizes with the EGF receptor in WDR54-specific vesicle where it sustains the internalization and controls the degradation of the EGF receptor after EGF stimulation. This chain is WD repeat-containing protein 54, found in Homo sapiens (Human).